Reading from the N-terminus, the 1207-residue chain is AP-3 complex subunit delta-1 (1207 aa).

A2 is subject to N-acetylalanine. HEAT repeat units follow at residues 34 to 71 (KYIS…LGYD), 142 to 179 (DLAR…KYPE), 180 to 216 (SLRP…RNPK), 218 to 254 (YLSL…LEPR), 257 to 296 (KKLI…GMPN), 298 to 336 (SASI…THPK), 337 to 373 (SVQA…KKNL), 375 to 409 (EIVK…QSNY), and 521 to 558 (VYVQ…ERLP). Disordered regions lie at residues 630-695 (PLSD…RYQD) and 731-970 (RRHR…EEPL). S632, S634, and S636 each carry phosphoserine. Residues 648–675 (EEQRHTKPRAPEADEQELARRREARRQE) are compositionally biased toward basic and acidic residues. The stretch at 659–679 (EADEQELARRREARRQEQANN) forms a coiled coil. S688 bears the Phosphoserine mark. Residues 725 to 752 (VKLEEERRHRQRLEKDKRKKKKRERERR) are a coiled coil. A compositionally biased stretch (basic and acidic residues) spans 731–740 (RRHRQRLEKD). Basic residues predominate over residues 741 to 759 (KRKKKKRERERRGTRRHSS). Phosphoserine is present on residues S758 and S759. Position 762 is a phosphothreonine (T762). Phosphoserine is present on residues S764, S788, and S829. Over residues 777–794 (VTEEMPENALPSDEDDKD) the composition is skewed to acidic residues. The segment covering 795 to 840 (PNDPYRALDIDLDKPLADSEKLPVQKHRNAETSKSPEKEDVPLVEK) has biased composition (basic and acidic residues). The span at 841–854 (KSKKPKKKEKKHKE) shows a compositional bias: basic residues. Positions 846–870 (KKKEKKHKEKEREKKKKEVEKGEDL) form a coiled coil. 2 stretches are compositionally biased toward basic and acidic residues: residues 855 to 869 (KERE…KGED) and 899 to 908 (EGQEEPRGEE). Basic residues predominate over residues 923–933 (PSKHKKKKHKK). Residues 952–969 (ADEEAAEPVENGTLEEEP) show a composition bias toward acidic residues.

It belongs to the adaptor complexes large subunit family. In terms of assembly, AP-3 associates with the BLOC-1 complex. Adaptor protein complex 3 (AP-3) is a heterotetramer composed of two large adaptins (delta-type subunit AP3D1 and beta-type subunit AP3B1 or AP3B2), a medium adaptin (mu-type subunit AP3M1 or AP3M2) and a small adaptin (sigma-type subunit APS1 or AP3S2). Interacts with SLC30A2. Interacts with CLN3 (via dileucine motif); this interaction facilitates lysosomal targeting.

It localises to the cytoplasm. Its subcellular location is the golgi apparatus membrane. Its function is as follows. Part of the AP-3 complex, an adaptor-related complex which is not clathrin-associated. The complex is associated with the Golgi region as well as more peripheral structures. It facilitates the budding of vesicles from the Golgi membrane and may be directly involved in trafficking to lysosomes. Involved in process of CD8+ T-cell and NK cell degranulation. In concert with the BLOC-1 complex, AP-3 is required to target cargos into vesicles assembled at cell bodies for delivery into neurites and nerve terminals. This chain is AP-3 complex subunit delta-1 (AP3D1), found in Bos taurus (Bovine).